A 193-amino-acid polypeptide reads, in one-letter code: Ion-translocating oxidoreductase complex subunit B (193 aa).

The hydrophobic stretch occupies residues 1-26 (MSTMLIAVILLTLLALFFGVLLGFAA). Residues 32-90 (EGNPIVDELEAILPQTQCGQCGYPGCRPYAEAIANGDKVNKCPPGGTATMEKLASLMGV) enclose the 4Fe-4S domain. [4Fe-4S] cluster is bound by residues cysteine 49, cysteine 52, cysteine 57, cysteine 73, cysteine 114, cysteine 117, cysteine 120, cysteine 124, cysteine 144, cysteine 147, cysteine 150, and cysteine 154. 2 consecutive 4Fe-4S ferredoxin-type domains span residues 105–134 (KVAY…GAGK) and 136–164 (MHTV…MIPV).

It belongs to the 4Fe4S bacterial-type ferredoxin family. RnfB subfamily. As to quaternary structure, the complex is composed of six subunits: RnfA, RnfB, RnfC, RnfD, RnfE and RnfG. It depends on [4Fe-4S] cluster as a cofactor.

Its subcellular location is the cell inner membrane. Part of a membrane-bound complex that couples electron transfer with translocation of ions across the membrane. In Shewanella sp. (strain MR-7), this protein is Ion-translocating oxidoreductase complex subunit B.